The primary structure comprises 380 residues: Chaperone protein DnaJ (380 aa).

The 66-residue stretch at 5-70 (DYYEILGVTK…QKRAAYDRFG (66 aa)) folds into the J domain. The CR-type zinc finger occupies 137 to 215 (GKAETIKIPT…CQGAGRVNRE (79 aa)). Residues cysteine 150, cysteine 153, cysteine 167, cysteine 170, cysteine 189, cysteine 192, cysteine 203, and cysteine 206 each coordinate Zn(2+). CXXCXGXG motif repeat units follow at residues 150-157 (CEVCDGSG), 167-174 (CPTCAGYG), 189-196 (CPNCHGRG), and 203-210 (CTACQGAG).

The protein belongs to the DnaJ family. As to quaternary structure, homodimer. The cofactor is Zn(2+).

The protein localises to the cytoplasm. In terms of biological role, participates actively in the response to hyperosmotic and heat shock by preventing the aggregation of stress-denatured proteins and by disaggregating proteins, also in an autonomous, DnaK-independent fashion. Unfolded proteins bind initially to DnaJ; upon interaction with the DnaJ-bound protein, DnaK hydrolyzes its bound ATP, resulting in the formation of a stable complex. GrpE releases ADP from DnaK; ATP binding to DnaK triggers the release of the substrate protein, thus completing the reaction cycle. Several rounds of ATP-dependent interactions between DnaJ, DnaK and GrpE are required for fully efficient folding. Also involved, together with DnaK and GrpE, in the DNA replication of plasmids through activation of initiation proteins. In Methylobacterium radiotolerans (strain ATCC 27329 / DSM 1819 / JCM 2831 / NBRC 15690 / NCIMB 10815 / 0-1), this protein is Chaperone protein DnaJ.